Consider the following 663-residue polypeptide: Leishmanolysin-like peptidase (663 aa).

Histidine 246 contacts Zn(2+). Glutamate 247 is an active-site residue. Residues histidine 250 and histidine 353 each coordinate Zn(2+).

Belongs to the peptidase M8 family. It depends on Zn(2+) as a cofactor.

Its subcellular location is the cytoplasm. Essential for the coordination of mitotic progression, and also plays a role in cell migration. The sequence is that of Leishmanolysin-like peptidase from Caenorhabditis elegans.